A 51-amino-acid chain; its full sequence is Large ribosomal subunit protein bL33 (51 aa).

It belongs to the bacterial ribosomal protein bL33 family.

The sequence is that of Large ribosomal subunit protein bL33 from Colwellia psychrerythraea (strain 34H / ATCC BAA-681) (Vibrio psychroerythus).